Here is a 779-residue protein sequence, read N- to C-terminus: uncharacterized protein (779 aa).

[4Fe-4S] cluster contacts are provided by Cys-72 and Cys-75.

It belongs to the prokaryotic molybdopterin-containing oxidoreductase family. [4Fe-4S] cluster serves as cofactor. The cofactor is Mo-bis(molybdopterin guanine dinucleotide).

This is an uncharacterized protein from Mycobacterium bovis (strain ATCC BAA-935 / AF2122/97).